The primary structure comprises 234 residues: Sugar fermentation stimulation protein A (234 aa).

The segment at residues 201-220 (LLSEAQNKGVEVLAYKAELS) is a DNA-binding region (H-T-H motif).

Belongs to the SfsA family.

Functionally, binds to DNA non-specifically. Could be a regulatory factor involved in maltose metabolism. The chain is Sugar fermentation stimulation protein A from Salmonella arizonae (strain ATCC BAA-731 / CDC346-86 / RSK2980).